Here is a 421-residue protein sequence, read N- to C-terminus: MPFSVSWGILLLAGLCCLVPSSLVEDPQEDAAQKTDTSHHDQGDWEDLACQKISYNVTDLAFDLYKELADLSQTSNVLVTPTSVAMAFAMLSLGTKADTRTEILEGLNVNLTETPEAKIHECFQQVLQALSRPDTRLQLTTGSSLFVNKSMKLVDTFLEDTKKLYHSEASSINFRDTEEAKEQINNYVEKRTGRKVVDLVKHLKKDTSLALVDYISFHGKWKDKFKAEHIMVEGFHVDDKTIIRVPMINHLGRFDIHRDRELSSWVLAQHYVGNATAFFILPDPKKMWQLEEKLTYSHLENIQRAFDIRSINLHFPKLSISGTYKLKRVLRNLGITKIFSNEADLSGVSQEAPLKLSKAVHVAVLTIDEKGTEATGAPHLEEKAWSKYQTVMFNRPFLVIIKDDITNFPLFIGKVVNPTQK.

Positions 1–21 (MPFSVSWGILLLAGLCCLVPS) are cleaved as a signal peptide. N-linked (GlcNAc...) asparagine glycosylation is found at asparagine 56, asparagine 110, asparagine 148, and asparagine 274.

It belongs to the serpin family. Interacts with CANX and PDIA3. Glycosylated. In terms of tissue distribution, expressed in the liver, leukocytes and testis. Also detected in brain, colon, uterus, esophagus, spleen, trachea, kidney and lung.

It is found in the endoplasmic reticulum. In terms of biological role, putative serine protease inhibitor. In Homo sapiens (Human), this protein is Alpha-1-antitrypsin-related protein (SERPINA2).